The sequence spans 210 residues: Large ribosomal subunit protein uL4 (210 aa).

A disordered region spans residues 41 to 79; it reads MANARQGTASTKTRAEVRGGGRKPWRQKGTGRARAGSNR. A compositionally biased stretch (polar residues) spans 43 to 52; it reads NARQGTASTK. Over residues 60 to 71 the composition is skewed to basic residues; the sequence is GGRKPWRQKGTG.

The protein belongs to the universal ribosomal protein uL4 family. In terms of assembly, part of the 50S ribosomal subunit.

Its function is as follows. One of the primary rRNA binding proteins, this protein initially binds near the 5'-end of the 23S rRNA. It is important during the early stages of 50S assembly. It makes multiple contacts with different domains of the 23S rRNA in the assembled 50S subunit and ribosome. Forms part of the polypeptide exit tunnel. The protein is Large ribosomal subunit protein uL4 of Cyanothece sp. (strain PCC 7425 / ATCC 29141).